The following is a 661-amino-acid chain: Bifunctional polymyxin resistance protein ArnA (661 aa).

Residues 1–304 form a formyltransferase ArnAFT region; sequence MKAVVFAYHD…ALGLVSGAVI (304 aa). The active-site Proton donor; for formyltransferase activity is the His104. Residues Arg114 and 136–140 each bind (6R)-10-formyltetrahydrofolate; that span reads VNRAD. The segment at 314-661 is dehydrogenase ArnADH; it reads RRTRVLILGV…TVELVDDKNP (348 aa). Residues Asp347 and 368-369 each bind NAD(+); that span reads DI. UDP-alpha-D-glucuronate contacts are provided by residues Ala393, Tyr398, and 432 to 433; that span reads TS. Residue Glu434 is the Proton acceptor; for decarboxylase activity of the active site. Residues Arg460, Asn492, 526 to 535, and Tyr613 each bind UDP-alpha-D-glucuronate; that span reads KLIEGGKQKR. Arg619 functions as the Proton donor; for decarboxylase activity in the catalytic mechanism.

It in the N-terminal section; belongs to the Fmt family. UDP-L-Ara4N formyltransferase subfamily. The protein in the C-terminal section; belongs to the NAD(P)-dependent epimerase/dehydratase family. UDP-glucuronic acid decarboxylase subfamily. In terms of assembly, homohexamer, formed by a dimer of trimers.

It catalyses the reaction UDP-alpha-D-glucuronate + NAD(+) = UDP-beta-L-threo-pentopyranos-4-ulose + CO2 + NADH. The enzyme catalyses UDP-4-amino-4-deoxy-beta-L-arabinose + (6R)-10-formyltetrahydrofolate = UDP-4-deoxy-4-formamido-beta-L-arabinose + (6S)-5,6,7,8-tetrahydrofolate + H(+). The protein operates within nucleotide-sugar biosynthesis; UDP-4-deoxy-4-formamido-beta-L-arabinose biosynthesis; UDP-4-deoxy-4-formamido-beta-L-arabinose from UDP-alpha-D-glucuronate: step 1/3. It participates in nucleotide-sugar biosynthesis; UDP-4-deoxy-4-formamido-beta-L-arabinose biosynthesis; UDP-4-deoxy-4-formamido-beta-L-arabinose from UDP-alpha-D-glucuronate: step 3/3. Its pathway is bacterial outer membrane biogenesis; lipopolysaccharide biosynthesis. Its function is as follows. Bifunctional enzyme that catalyzes the oxidative decarboxylation of UDP-glucuronic acid (UDP-GlcUA) to UDP-4-keto-arabinose (UDP-Ara4O) and the addition of a formyl group to UDP-4-amino-4-deoxy-L-arabinose (UDP-L-Ara4N) to form UDP-L-4-formamido-arabinose (UDP-L-Ara4FN). The modified arabinose is attached to lipid A and is required for resistance to polymyxin and cationic antimicrobial peptides. The chain is Bifunctional polymyxin resistance protein ArnA from Klebsiella pneumoniae subsp. pneumoniae (strain ATCC 700721 / MGH 78578).